The chain runs to 133 residues: Small ribosomal subunit protein eS8 (133 aa).

Residues 1 to 31 are disordered; the sequence is MGFYQGPDNRKITGGLKGKHRDKRKYEIGNP.

It belongs to the eukaryotic ribosomal protein eS8 family. Part of the 30S ribosomal subunit.

This is Small ribosomal subunit protein eS8 from Saccharolobus solfataricus (strain ATCC 35092 / DSM 1617 / JCM 11322 / P2) (Sulfolobus solfataricus).